We begin with the raw amino-acid sequence, 268 residues long: LOB domain-containing protein 22 (268 aa).

A disordered region spans residues 1-31 (MPSGKPSSVFPLHPKPTPLKPSSSTSSSNNN). Residues 22–31 (SSSTSSSNNN) are compositionally biased toward low complexity. Residues 35–136 (QACAACKYQR…NELEIVLQQL (102 aa)) enclose the LOB domain.

Belongs to the LOB domain-containing protein family.

The polypeptide is LOB domain-containing protein 22 (LBD22) (Arabidopsis thaliana (Mouse-ear cress)).